The sequence spans 498 residues: Hyaluronan-mediated motility receptor (498 aa).

The segment at 150 to 331 (EEMTSERNVF…ITDLQNQLRQ (182 aa)) is required for interaction with FAM83D. N262 and N302 each carry an N-linked (GlcNAc...) asparagine glycan. 2 hyaluronic acid-binding regions span residues 420–430 (KQKIKHVVKLK) and 442–451 (KLRSQLAKRK). N-linked (GlcNAc...) asparagine glycosylation is present at N483. Residue T488 is modified to Phosphothreonine.

In terms of assembly, interacts with ANKRD26. Interacts with DYNLL1. Interacts with FAM83D/CHICA.

It is found in the cell surface. It localises to the cytoplasm. Its subcellular location is the cytoskeleton. The protein localises to the spindle. In terms of biological role, receptor for hyaluronic acid (HA). Involved in cell motility. When hyaluronan binds to HMMR, the phosphorylation of a number of proteins, including the PTK2/FAK1 occurs. May also be involved in cellular transformation and metastasis formation, and in regulating extracellular-regulated kinase (ERK) activity. May act as a regulator of adipogenisis. The polypeptide is Hyaluronan-mediated motility receptor (Hmmr) (Rattus norvegicus (Rat)).